A 259-amino-acid polypeptide reads, in one-letter code: Putative protein phosphatase (259 aa).

The 248-residue stretch at 8-255 (LFASLSKKGP…DNITLNLINL (248 aa)) folds into the PPM-type phosphatase domain.

It catalyses the reaction O-phospho-L-seryl-[protein] + H2O = L-seryl-[protein] + phosphate. The catalysed reaction is O-phospho-L-threonyl-[protein] + H2O = L-threonyl-[protein] + phosphate. The sequence is that of Putative protein phosphatase from Mycoplasma pneumoniae (strain ATCC 29342 / M129 / Subtype 1) (Mycoplasmoides pneumoniae).